A 275-amino-acid polypeptide reads, in one-letter code: Arylalkylamine N-acetyltransferase 1 (275 aa).

Residues 181–183 and 189–193 contribute to the acetyl-CoA site; these read LSV and GLGIA. An N-acetyltransferase domain is found at 181–254; the sequence is LSVDTNYRGL…GEVVFKPAAP (74 aa).

Belongs to the acetyltransferase family. AANAT subfamily. In terms of tissue distribution, in the adult, expressed in the midgut portion of the thoracic segments and the frontal half of the abdomen (at protein level). Expressed in the epithelial cell layer facing the lumen of the gut (at protein level). In the brain, expressed in a sub-populations of neurons and astrocytes, and in a set of distinct stripes in the optic lobes (at protein level). Expressed mainly in serotonergic neurons but also in subsets of glutamatergic, GABAergic and cholinergic neurons (at protein level).

Its subcellular location is the cytoplasm. The protein localises to the nucleus. The catalysed reaction is a 2-arylethylamine + acetyl-CoA = an N-acetyl-2-arylethylamine + CoA + H(+). The enzyme catalyses serotonin + acetyl-CoA = N-acetylserotonin + CoA + H(+). It carries out the reaction dopamine + acetyl-CoA = N-acetyldopamine + CoA + H(+). It catalyses the reaction tyramine + acetyl-CoA = N-acetyltyramine + CoA + H(+). The catalysed reaction is octopamine + acetyl-CoA = N-acetyloctopamine + CoA + H(+). The enzyme catalyses 5-methoxytryptamine + acetyl-CoA = melatonin + CoA + H(+). It carries out the reaction 2-phenylethylamine + acetyl-CoA = N-(2-phenylethyl)acetamide + CoA + H(+). It catalyses the reaction noradrenaline + acetyl-CoA = N-acetylnoradrenaline + CoA + H(+). The catalysed reaction is tyramine + butanoyl-CoA = N-butanoyltyramine + CoA + H(+). The enzyme catalyses tyramine + hexanoyl-CoA = N-hexanoyltyramine + CoA + H(+). It carries out the reaction tryptamine + acetyl-CoA = N-acetyltryptamine + CoA + H(+). It catalyses the reaction dopamine + hexadecanoyl-CoA = N-hexadecanoyl-dopamine + CoA + H(+). The catalysed reaction is dopamine + (9Z)-octadecenoyl-CoA = N-(9Z-octadecanoyl)-dopamine + CoA + H(+). The enzyme catalyses serotonin + hexadecanoyl-CoA = N-hexadecanoyl-serotonin + CoA + H(+). It carries out the reaction serotonin + (9Z)-octadecenoyl-CoA = N-(9Z-octadecenoyl)-serotonin + CoA + H(+). It catalyses the reaction serotonin + octadecanoyl-CoA = N-octadecanoyl-serotonin + CoA + H(+). The catalysed reaction is serotonin + (5Z,8Z,11Z,14Z)-eicosatetraenoyl-CoA = N-[(5Z,8Z,11Z,14Z)-eicosatetraenoyl]-serotonin + CoA + H(+). The protein operates within aromatic compound metabolism; melatonin biosynthesis; melatonin from serotonin: step 1/2. Inhibited by long-chain acyl-CoA thioesters, oleoyl-CoA (an analog of acetyl-CoA) and tyrosol (an analog of tyramine). Its function is as follows. Catalyzes N-acetylation of tryptamine, tyramine, dopamine, serotonin and octopamine. In astrocytes, regulates sleep homeostasis by limiting the accumulation of serotonin and dopamine in the brain upon sleep deprivation. Is not essential for sclerotization. This Drosophila melanogaster (Fruit fly) protein is Arylalkylamine N-acetyltransferase 1.